Here is a 204-residue protein sequence, read N- to C-terminus: Peptide deformylase (204 aa).

Fe cation is bound by residues Cys-131 and His-174. The active site involves Glu-175. His-178 provides a ligand contact to Fe cation.

Belongs to the polypeptide deformylase family. The cofactor is Fe(2+).

It catalyses the reaction N-terminal N-formyl-L-methionyl-[peptide] + H2O = N-terminal L-methionyl-[peptide] + formate. Functionally, removes the formyl group from the N-terminal Met of newly synthesized proteins. Requires at least a dipeptide for an efficient rate of reaction. N-terminal L-methionine is a prerequisite for activity but the enzyme has broad specificity at other positions. This chain is Peptide deformylase, found in Streptococcus mutans serotype c (strain ATCC 700610 / UA159).